A 209-amino-acid polypeptide reads, in one-letter code: Heat shock protein beta-1 (209 aa).

Position 12 is an omega-N-methylarginine (R12). S13 bears the Phosphoserine mark. Phosphoserine; by MAPKAPK2 and MAPKAPK3 is present on S15. At S27 the chain carries Phosphoserine. An interaction with TGFB1I1 region spans residues 74 to 209; sequence APAYSRALSR…AGKSEQSGAK (136 aa). In terms of domain architecture, sHSP spans 80–188; the sequence is ALSRQLSSGV…QSAEITIPVT (109 aa). 2 positions are modified to phosphoserine; by MAPKAPK2, MAPKAPK3 and MAPKAPK5: S82 and S86. Residues S87, S90, and S102 each carry the phosphoserine modification. Position 127 is an N6-acetyllysine (K127). Position 178 is a phosphothreonine (T178). A phosphoserine mark is found at S180 and S203.

The protein belongs to the small heat shock protein (HSP20) family. In terms of assembly, homooligomer. Homodimer; becomes monomeric upon activation. Heterooligomer; with HSPB6. Associates with alpha- and beta-tubulin. Interacts with TGFB1I1. Interacts with CRYAB. Interacts with HSPB8. Interacts with HSPBAP1. Post-translationally, phosphorylated upon exposure to protein kinase C activators and heat shock. Phosphorylation by MAPKAPK2 and MAPKAPK3 in response to stress dissociates HSPB1 from large small heat-shock protein (sHsps) oligomers and impairs its chaperone activity and ability to protect against oxidative stress effectively. Phosphorylation by MAPKAPK5 in response to PKA stimulation induces F-actin rearrangement.

Its subcellular location is the cytoplasm. The protein resides in the nucleus. It is found in the cytoskeleton. It localises to the spindle. In terms of biological role, small heat shock protein which functions as a molecular chaperone probably maintaining denatured proteins in a folding-competent state. Plays a role in stress resistance and actin organization. Through its molecular chaperone activity may regulate numerous biological processes including the phosphorylation and the axonal transport of neurofilament proteins. This chain is Heat shock protein beta-1 (HSPB1), found in Canis lupus familiaris (Dog).